The sequence spans 173 residues: Translation initiation factor IF-3 (173 aa).

It belongs to the IF-3 family. As to quaternary structure, monomer.

The protein resides in the cytoplasm. Functionally, IF-3 binds to the 30S ribosomal subunit and shifts the equilibrium between 70S ribosomes and their 50S and 30S subunits in favor of the free subunits, thus enhancing the availability of 30S subunits on which protein synthesis initiation begins. The sequence is that of Translation initiation factor IF-3 from Lactiplantibacillus plantarum (strain ATCC BAA-793 / NCIMB 8826 / WCFS1) (Lactobacillus plantarum).